We begin with the raw amino-acid sequence, 1057 residues long: Adenylate-forming reductase stbB (1057 aa).

Residues Ser21–Glu378 form an adenylation (A) domain region. AMP is bound by residues His251, Asn344 to Phe345, Thr349, and Ala423 to Arg426. The Carrier domain maps to Glu564 to Ser651. Ser600 carries the O-(pantetheine 4'-phosphoryl)serine modification. Residues Ile693 to Val1025 are reductase (R) domain. NADP(+)-binding positions include Ser700 to Leu703, Ala783 to Trp785, Tyr858, and Lys862.

The protein belongs to the adenylate-forming reductase family.

It catalyses the reaction ilicicolinate B + AH2 + ATP = ilicicolin B + A + AMP + diphosphate. It participates in secondary metabolite biosynthesis; terpenoid biosynthesis. Its function is as follows. Nonribosomal peptide synthase-like protein; part of the cluster that mediates the biosynthesis of LL-Z1272-beta, also known as ilicicolin B, a prenylated aryl-aldehyde produced by several fungi and that serves as a key pathway intermediate for many fungal meroterpenoids. The first step in the pathway is performed by the non-reducing polyketide synthase stbA that produces orsellinic acid by condensing acetyl-CoA with 3 malonyl-CoA units. The prenyltransferase stbC then prenylates orsenilic acid into grifolic acid. Finally, grifolic acid is reduced to ilicicolin B by the NRPS-like protein stbB. In Stachybotrys bisbyi (Hyalostachybotrys bisbyi), this protein is Adenylate-forming reductase stbB.